The sequence spans 195 residues: MVKQAMKEEEKKRNTAMQSKYKGVRKRKWGKWVSEIRLPHSRERIWLGSYDTPEKAARAFDAAQFCLRGGDANFNFPNNPPSISVEKSLTPPEIQEAAARFANTFQDIVKGEEESGLVPGSEIRPESPSTSASVATSTVDYDFSFLDLLPMNFGFDSFSDDFSGFSGGDRFTEILPIEDYGGESLLDESLILWDF.

The segment covering 1 to 13 has biased composition (basic and acidic residues); it reads MVKQAMKEEEKKR. Positions 1–22 are disordered; the sequence is MVKQAMKEEEKKRNTAMQSKYK. The segment at residues 20 to 77 is a DNA-binding region (AP2/ERF); that stretch reads KYKGVRKRKWGKWVSEIRLPHSRERIWLGSYDTPEKAARAFDAAQFCLRGGDANFNFP.

Belongs to the AP2/ERF transcription factor family. ERF subfamily.

The protein resides in the nucleus. Its function is as follows. Probably acts as a transcriptional activator. Binds to the GCC-box pathogenesis-related promoter element. May be involved in the regulation of gene expression by stress factors and by components of stress signal transduction pathways. This chain is Ethylene-responsive transcription factor ERF018 (ERF018), found in Arabidopsis thaliana (Mouse-ear cress).